A 273-amino-acid chain; its full sequence is Phycobilisome 32.1 kDa linker polypeptide, phycocyanin-associated, rod 2 (273 aa).

The PBS-linker domain maps to 1 to 180 (MTSLVSAQRL…VYRGYATSDR (180 aa)). Positions 220 to 273 (NQMYRLQVIQGAAPGRGTRVRRGKAEYLVSYDNLSAKLQQINRQGDTVTMISLA) constitute a CpcD-like domain.

Belongs to the phycobilisome linker protein family. As to quaternary structure, part of 2 PBS rod complexes, the conventional CpcG-PBS rod and a photosystem I-specific CpcL-PBS rod, both of which include ferredoxin--NADP reductase (petH). CpcG-PBS has on average 3 stacked phycocyanin hexamers (PC, CpcA and CpcB). Linker CpcG connects the PC stack to the thylakoid, the hexamers are linked by 1 copy of CpcC1, 1 copy of CpcC2 and the stack is terminated by a single copy of CpcD. The CpcL-PBS has on average 5 stacked phycocyanin hexamers (PC, CpcA and CpcB). Linker CpcL connects the PC stack to the thylakoid, the hexamers are linked by 1 copy of CpcC1, 3 copies of CpcC2 and the stack is terminated by a single copy of CpcD. Interacts with the C-phycocyanin (PC) beta subunit (cpcB), it may fit into the center of the PC hexamer.

The protein localises to the cellular thylakoid membrane. Functionally, rod linker protein, associated with phycocyanin. Linker polypeptides determine the state of aggregation and the location of the disk-shaped phycobiliprotein units within the phycobilisome and modulate their spectroscopic properties in order to mediate a directed and optimal energy transfer. The chain is Phycobilisome 32.1 kDa linker polypeptide, phycocyanin-associated, rod 2 (cpcC2) from Synechocystis sp. (strain ATCC 27184 / PCC 6803 / Kazusa).